We begin with the raw amino-acid sequence, 428 residues long: MMTYQEIFNEIKNKAYFKNHRHVLIAVSGGVDSMNLLHFLYLFQDKLKIRIGIAHVNHKQRSESDSEEAYLKCWAKKHDIPIYVSNFEGIFSEKAARDWRYAFFKSIMLKNNYSALVTAHHSDDQAETILMRLIRGSRLRHLSGIKSVQPFANGQLIRPFLTFSKKDLPEIFHFEDSSNRELSFLRNRVRNNYLPLLKQENPRFIQGLNQLALENSLLFQAFKELTNHITTTDLTEFNEQSKSIQYFLLQDYLEGFPDLDLKKSQFTQLLQIIQTAKQGYYYLKKDYYIFIDKFSFKITKIVPKTELVKDEKMLEYDSNLCYRDYCFSFMPKSNEDQGQVSIPLFSLSSIKLRSRQSGDYISFGHFSKKIRRLFIDEKFTIAERQNAIIGEQDEQIIFVLIGNKTYLRKACKHDIMLAKLYIDKLEKG.

28-33 (SGGVDS) contributes to the ATP binding site.

The protein belongs to the tRNA(Ile)-lysidine synthase family.

The protein localises to the cytoplasm. The enzyme catalyses cytidine(34) in tRNA(Ile2) + L-lysine + ATP = lysidine(34) in tRNA(Ile2) + AMP + diphosphate + H(+). In terms of biological role, ligates lysine onto the cytidine present at position 34 of the AUA codon-specific tRNA(Ile) that contains the anticodon CAU, in an ATP-dependent manner. Cytidine is converted to lysidine, thus changing the amino acid specificity of the tRNA from methionine to isoleucine. The chain is tRNA(Ile)-lysidine synthase from Streptococcus pyogenes serotype M3 (strain ATCC BAA-595 / MGAS315).